Here is a 460-residue protein sequence, read N- to C-terminus: Methylenetetrahydrofolate--tRNA-(uracil-5-)-methyltransferase TrmFO (460 aa).

15–20 contacts FAD; sequence GAGLAG.

The protein belongs to the MnmG family. TrmFO subfamily. FAD serves as cofactor.

Its subcellular location is the cytoplasm. The enzyme catalyses uridine(54) in tRNA + (6R)-5,10-methylene-5,6,7,8-tetrahydrofolate + NADH + H(+) = 5-methyluridine(54) in tRNA + (6S)-5,6,7,8-tetrahydrofolate + NAD(+). It catalyses the reaction uridine(54) in tRNA + (6R)-5,10-methylene-5,6,7,8-tetrahydrofolate + NADPH + H(+) = 5-methyluridine(54) in tRNA + (6S)-5,6,7,8-tetrahydrofolate + NADP(+). Catalyzes the folate-dependent formation of 5-methyl-uridine at position 54 (M-5-U54) in all tRNAs. The polypeptide is Methylenetetrahydrofolate--tRNA-(uracil-5-)-methyltransferase TrmFO (Synechococcus sp. (strain CC9902)).